Here is a 462-residue protein sequence, read N- to C-terminus: NAD-capped RNA hydrolase NUDT12 (462 aa).

3 ANK repeats span residues 11–40 (EIVTQFHCSAAEGDIAKLTGILSHSPSLLN), 45–74 (NGWTALMYAARNGHPEIVQFLLEKGCDRSI), and 78–98 (SRQTALDIAVFWGYKHIANLL). At Lys185 the chain carries N6-succinyllysine. The Zn(2+) site is built by Cys284 and Cys287. Lys292 carries the post-translational modification N6-succinyllysine. Residues Cys302 and Cys307 each contribute to the Zn(2+) site. Substrate is bound by residues Tyr318, 354-356 (AGF), Glu370, Glu374, and Glu415. The Nudix hydrolase domain maps to 319-453 (PRVDPVVIMQ…SRAIAHQLIK (135 aa)). The Mg(2+) site is built by Ala354, Glu370, Glu374, and Glu415. Positions 355–376 (GFIEPGETIEDAVRREVEEESG) match the Nudix box motif. Residues 460-462 (PNL) carry the Microbody targeting signal motif.

It belongs to the Nudix hydrolase family. NudC subfamily. As to quaternary structure, homodimer. Homodimerization is essential for its catalytic activity and protein stability. Interacts (via ANK repeats) with BLMH. Requires Mg(2+) as cofactor. It depends on Zn(2+) as a cofactor.

The protein resides in the cytoplasm. Its subcellular location is the peroxisome. The protein localises to the cytoplasmic granule. It carries out the reaction a 5'-end NAD(+)-phospho-ribonucleoside in mRNA + H2O = a 5'-end phospho-adenosine-phospho-ribonucleoside in mRNA + beta-nicotinamide D-ribonucleotide + 2 H(+). The enzyme catalyses NAD(+) + H2O = beta-nicotinamide D-ribonucleotide + AMP + 2 H(+). The catalysed reaction is NADH + H2O = reduced beta-nicotinamide D-ribonucleotide + AMP + 2 H(+). It catalyses the reaction NADPH + H2O = reduced beta-nicotinamide D-ribonucleotide + adenosine 2',5'-bisphosphate + 2 H(+). Functionally, mRNA decapping enzyme that specifically removes the nicotinamide adenine dinucleotide (NAD) cap from a subset of mRNAs by hydrolyzing the diphosphate linkage to produce nicotinamide mononucleotide (NMN) and 5' monophosphate mRNA. The NAD-cap is present at the 5'-end of some RNAs; in contrast to the canonical N7 methylguanosine (m7G) cap, the NAD cap promotes mRNA decay. Preferentially acts on NAD-capped transcripts in response to nutrient stress. Also acts on free nicotinamide adenine dinucleotide molecules: hydrolyzes NAD(H) into NMN(H) and AMP, and NADPH into NMNH and 2',5'-ADP. May act to regulate the concentration of peroxisomal nicotinamide nucleotide cofactors required for oxidative metabolism in this organelle. Regulates the levels of circadian clock components PER1, PER2, PER3 and CRY2 in the liver. The sequence is that of NAD-capped RNA hydrolase NUDT12 from Homo sapiens (Human).